The sequence spans 126 residues: Urease subunit beta (126 aa).

The protein belongs to the urease beta subunit family. In terms of assembly, heterotrimer of UreA (gamma), UreB (beta) and UreC (alpha) subunits. Three heterotrimers associate to form the active enzyme.

It localises to the cytoplasm. The enzyme catalyses urea + 2 H2O + H(+) = hydrogencarbonate + 2 NH4(+). The protein operates within nitrogen metabolism; urea degradation; CO(2) and NH(3) from urea (urease route): step 1/1. In Gloeothece citriformis (strain PCC 7424) (Cyanothece sp. (strain PCC 7424)), this protein is Urease subunit beta.